The following is a 527-amino-acid chain: Peptide chain release factor 3 (527 aa).

The 270-residue stretch at 9-278 (NKRRTFAIIS…GLTQWAPKPQ (270 aa)) folds into the tr-type G domain. Residues 18 to 25 (SHPDAGKT), 86 to 90 (DTPGH), and 140 to 143 (NKLD) each bind GTP.

It belongs to the TRAFAC class translation factor GTPase superfamily. Classic translation factor GTPase family. PrfC subfamily.

The protein localises to the cytoplasm. Increases the formation of ribosomal termination complexes and stimulates activities of RF-1 and RF-2. It binds guanine nucleotides and has strong preference for UGA stop codons. It may interact directly with the ribosome. The stimulation of RF-1 and RF-2 is significantly reduced by GTP and GDP, but not by GMP. The chain is Peptide chain release factor 3 from Haemophilus influenzae (strain 86-028NP).